A 214-amino-acid polypeptide reads, in one-letter code: uncharacterized protein (214 aa).

A helical membrane pass occupies residues 10-30; that stretch reads LLLAGIGGFMVGGLASWVVSS. Residues 147-157 show a composition bias toward polar residues; sequence SSQANSQSTQP. The disordered stretch occupies residues 147–166; that stretch reads SSQANSQSTQPRDPIPTENF.

It is found in the membrane. This is an uncharacterized protein from Schizosaccharomyces pombe (strain 972 / ATCC 24843) (Fission yeast).